The chain runs to 347 residues: tRNA N6-adenosine threonylcarbamoyltransferase (347 aa).

2 residues coordinate Fe cation: His111 and His115. Residues 134-138 (LVSGG), Asp167, Gly180, and Asn276 each bind substrate. Fe cation is bound at residue Asp304.

This sequence belongs to the KAE1 / TsaD family. Fe(2+) is required as a cofactor.

Its subcellular location is the cytoplasm. It carries out the reaction L-threonylcarbamoyladenylate + adenosine(37) in tRNA = N(6)-L-threonylcarbamoyladenosine(37) in tRNA + AMP + H(+). In terms of biological role, required for the formation of a threonylcarbamoyl group on adenosine at position 37 (t(6)A37) in tRNAs that read codons beginning with adenine. Is involved in the transfer of the threonylcarbamoyl moiety of threonylcarbamoyl-AMP (TC-AMP) to the N6 group of A37, together with TsaE and TsaB. TsaD likely plays a direct catalytic role in this reaction. This is tRNA N6-adenosine threonylcarbamoyltransferase from Nitrosospira multiformis (strain ATCC 25196 / NCIMB 11849 / C 71).